The primary structure comprises 439 residues: MAEYFKDIPKVKFEGTSSDNPLAFRHYNPEELVLGKSMKEHLRLAACYWHNFCWDGADVFGAGTFNRPWLQAGDAMQRAKEKADVAFEFFSKLNIPYYCFHDVDVSPEGNSIKEYINNFAQMTDVLEAKQEETGLKLLWGTANLFSNPRYASGAASSPNPEVFTYGATQVMHAMNATKRLGGENYVLWGGREGYETLLNTDLRQEREQLGRFMNMVVEHKHKIGFKGLLLIEPKPQEPTKHQYDYDTATVYGFLKQYGLENEFKVNIEANHATLAGHSFQHEVATAISLGLFGSIDANRGDPQLGWDTDQFPNSVEELSLVIYEILKAGGFTSGGFNFDTKLRRQSSDPQDMFIAHIGGMDHLAIGLKKAALMIENDFLGQAVSKRYAGWNGELGKGIQGGDFNLESLANLCVDKNLQPKHVSGQQELLENKVNNVLYG.

Residues His101 and Asp104 contribute to the active site. 7 residues coordinate Mg(2+): Glu232, Glu268, His271, Asp296, Asp307, Asp309, and Asp339.

This sequence belongs to the xylose isomerase family. In terms of assembly, homotetramer. Requires Mg(2+) as cofactor.

The protein resides in the cytoplasm. It catalyses the reaction alpha-D-xylose = alpha-D-xylulofuranose. The sequence is that of Xylose isomerase from Pseudoalteromonas atlantica (strain T6c / ATCC BAA-1087).